Here is a 1181-residue protein sequence, read N- to C-terminus: WD repeat-containing protein 35 (1181 aa).

WD repeat units lie at residues 4–43 (YLSK…VLKL), 61–100 (LSMN…VWML), 105–143 (WIEE…IVGS), 147–185 (NRIW…IYDN), 193–241 (MKLS…IMRH), and 246–288 (NPVL…IVQF).

Component of the IFT complex A (IFT-A) complex. IFT-A complex is divided into a core subcomplex composed of IFT122:IFT140:WDR19 which is associated with TULP3 and a peripheral subcomplex composed of IFT43:WDR35:TTC21B. Interacts directy with IFT122, ITF43 and TTC21B. Interacts with IFT43. Interacts with CFAP61.

Its subcellular location is the cytoplasm. The protein localises to the cytoskeleton. It is found in the microtubule organizing center. The protein resides in the centrosome. It localises to the cilium axoneme. Its subcellular location is the cilium basal body. Functionally, as a component of the IFT complex A (IFT-A), a complex required for retrograde ciliary transport and entry into cilia of G protein-coupled receptors (GPCRs), it is involved in ciliogenesis and ciliary protein trafficking. May promote CASP3 activation and TNF-stimulated apoptosis. This chain is WD repeat-containing protein 35, found in Homo sapiens (Human).